The sequence spans 472 residues: Putative diacyglycerol O-acyltransferase MT3172 (472 aa).

His-139 serves as the catalytic Proton acceptor. Residues 217 to 238 (DRRVPPTFDRSAPPGPFQRGLS) form a disordered region.

It belongs to the long-chain O-acyltransferase family.

It catalyses the reaction an acyl-CoA + a 1,2-diacyl-sn-glycerol = a triacyl-sn-glycerol + CoA. It participates in glycerolipid metabolism; triacylglycerol biosynthesis. In Mycobacterium tuberculosis (strain CDC 1551 / Oshkosh), this protein is Putative diacyglycerol O-acyltransferase MT3172.